Here is a 935-residue protein sequence, read N- to C-terminus: Protein translocase subunit SecA (935 aa).

Residues Gln86, 104–108, and Asp494 contribute to the ATP site; that span reads GEGKT. The disordered stretch occupies residues 879–935; it reads EQAATARAQQHSSAAVAAPEQGATQRGAFGQRVSAADDAAPANRAERRAQKKPTKRH.

Belongs to the SecA family. As to quaternary structure, monomer and homodimer. Part of the essential Sec protein translocation apparatus which comprises SecA, SecYEG and auxiliary proteins SecDF. Other proteins may also be involved.

Its subcellular location is the cell membrane. The protein localises to the cytoplasm. It carries out the reaction ATP + H2O + cellular proteinSide 1 = ADP + phosphate + cellular proteinSide 2.. Part of the Sec protein translocase complex. Interacts with the SecYEG preprotein conducting channel. Has a central role in coupling the hydrolysis of ATP to the transfer of proteins into and across the cell membrane, serving as an ATP-driven molecular motor driving the stepwise translocation of polypeptide chains across the membrane. The sequence is that of Protein translocase subunit SecA from Leifsonia xyli subsp. xyli (strain CTCB07).